We begin with the raw amino-acid sequence, 278 residues long: Envelope glycoprotein L (278 aa).

The first 30 residues, 1–30 (MCRRPDCGFSFSPGPVILLWCCLLLPIVSS), serve as a signal peptide directing secretion. In terms of domain architecture, gL betaherpesvirus-type spans 43 to 256 (VPAECPELTR…DKYYAGLPPE (214 aa)). A disulfide bond links C154 and C159.

The protein belongs to the herpesviridae glycoprotein L (gL) family. Betaherpesvirinae gL subfamily. As to quaternary structure, interacts with glycoprotein H (gH); this interaction is necessary for the correct processing and cell surface expression of gH. Forms the envelope pentamer complex (PC) composed of gH, gL, UL128, UL130, and UL131A. The pentamer interacts with host NRP2. Forms the envelope trimer complex composed of gH, gL, and gO. The trimer interacts with host PDGFRA. The trimer also interacts with host EPHA2.

The protein resides in the virion membrane. The protein localises to the host cell membrane. Its subcellular location is the host Golgi apparatus. It localises to the host trans-Golgi network. Functionally, the heterodimer glycoprotein H-glycoprotein L is required for the fusion of viral and plasma membranes leading to virus entry into the host cell. Acts as a functional inhibitor of gH and maintains gH in an inhibited form. Upon binding to host integrins, gL dissociates from gH leading to activation of the viral fusion glycoproteins gB and gH. In human cytomegalovirus, forms two distincts complexes to mediate viral entry, a trimer and a pentamer at the surface of the virion envelope. The gH-gL-gO trimer is required for infection in fibroblasts by interacting with host PDGFRA, and in glioblastoma cells by interacting with host EPHA2. The gH-gL-UL128-UL130-UL131A pentamer is essential for viral entry in epithelial, endothelial and myeloid cells via interaction with host NRP2. The chain is Envelope glycoprotein L from Homo sapiens (Human).